A 26-amino-acid chain; its full sequence is Conotoxin Eb6.17 (26 aa).

Cystine bridges form between cysteine 7-cysteine 18 and cysteine 13-cysteine 25.

It belongs to the conotoxin O1 superfamily. In terms of tissue distribution, expressed by the venom duct.

The protein resides in the secreted. The chain is Conotoxin Eb6.17 (E1) from Conus ebraeus (Hebrew cone).